The chain runs to 78 residues: Small ribosomal subunit protein bS18 (78 aa).

It belongs to the bacterial ribosomal protein bS18 family. In terms of assembly, part of the 30S ribosomal subunit. Forms a tight heterodimer with protein bS6.

In terms of biological role, binds as a heterodimer with protein bS6 to the central domain of the 16S rRNA, where it helps stabilize the platform of the 30S subunit. This Lactobacillus delbrueckii subsp. bulgaricus (strain ATCC 11842 / DSM 20081 / BCRC 10696 / JCM 1002 / NBRC 13953 / NCIMB 11778 / NCTC 12712 / WDCM 00102 / Lb 14) protein is Small ribosomal subunit protein bS18.